The primary structure comprises 99 residues: Plastocyanin (99 aa).

One can recognise a Plastocyanin-like domain in the interval 1-99 (VEILLGGEDG…AGMVGKVTVN (99 aa)). Cu cation contacts are provided by H37, C84, H87, and M92.

Belongs to the plastocyanin family. Cu(2+) is required as a cofactor.

The protein resides in the plastid. It is found in the chloroplast thylakoid membrane. Participates in electron transfer between P700 and the cytochrome b6-f complex in photosystem I. This Sambucus nigra (European elder) protein is Plastocyanin (PETE).